Reading from the N-terminus, the 284-residue chain is Shikimate dehydrogenase (NADP(+)) (284 aa).

Residues 23–25 (SLS) and Thr-70 contribute to the shikimate site. The Proton acceptor role is filled by Lys-74. An NADP(+)-binding site is contributed by Glu-86. 2 residues coordinate shikimate: Asn-95 and Asp-111. NADP(+)-binding positions include 135–139 (GAGGA), 159–164 (NRTPGR), and Ala-227. Tyr-229 provides a ligand contact to shikimate. NADP(+) is bound at residue Gly-251.

It belongs to the shikimate dehydrogenase family. In terms of assembly, homodimer.

It catalyses the reaction shikimate + NADP(+) = 3-dehydroshikimate + NADPH + H(+). Its pathway is metabolic intermediate biosynthesis; chorismate biosynthesis; chorismate from D-erythrose 4-phosphate and phosphoenolpyruvate: step 4/7. Involved in the biosynthesis of the chorismate, which leads to the biosynthesis of aromatic amino acids. Catalyzes the reversible NADPH linked reduction of 3-dehydroshikimate (DHSA) to yield shikimate (SA). In Rubrobacter xylanophilus (strain DSM 9941 / JCM 11954 / NBRC 16129 / PRD-1), this protein is Shikimate dehydrogenase (NADP(+)).